A 352-amino-acid chain; its full sequence is Glutamine synthetase (352 aa).

Residues 3–82 (YQAEYIWIDG…LCEVQLTDFT (80 aa)) enclose the GS beta-grasp domain. The region spanning 87-352 (TRAAALGVAE…TTPAPAEASV (266 aa)) is the GS catalytic domain. Mg(2+) is bound by residues Glu108 and Glu110. Glu164 contributes to the ATP binding site. Mg(2+) contacts are provided by Glu169 and Glu176. Glu272 contributes to the L-glutamate binding site.

The protein belongs to the glutamine synthetase family. As to quaternary structure, homooctamer and homotetramer. The cofactor is Mg(2+).

It localises to the cytoplasm. The catalysed reaction is L-glutamate + NH4(+) + ATP = L-glutamine + ADP + phosphate + H(+). Catalyzes the ATP-dependent biosynthesis of glutamine from glutamate and ammonia. In Frankia alni, this protein is Glutamine synthetase.